Reading from the N-terminus, the 228-residue chain is UPF0758 protein SAB1521c (228 aa).

In terms of domain architecture, MPN spans 102 to 224 (KITQPSDVAD…FTSLVEAGYF (123 aa)). 3 residues coordinate Zn(2+): His173, His175, and Asp186. Residues 173 to 186 (HNHPSGDVTPSQED) carry the JAMM motif motif.

The protein belongs to the UPF0758 family.

The protein is UPF0758 protein SAB1521c of Staphylococcus aureus (strain bovine RF122 / ET3-1).